Reading from the N-terminus, the 309-residue chain is Homoserine O-succinyltransferase (309 aa).

Catalysis depends on C142, which acts as the Acyl-thioester intermediate. 2 residues coordinate substrate: K163 and S192. Catalysis depends on H235, which acts as the Proton acceptor. Residue E237 is part of the active site. R249 is a binding site for substrate.

It belongs to the MetA family. Homodimer.

The protein localises to the cytoplasm. It catalyses the reaction L-homoserine + succinyl-CoA = O-succinyl-L-homoserine + CoA. Its pathway is amino-acid biosynthesis; L-methionine biosynthesis via de novo pathway; O-succinyl-L-homoserine from L-homoserine: step 1/1. Functionally, transfers a succinyl group from succinyl-CoA to L-homoserine, forming succinyl-L-homoserine. The protein is Homoserine O-succinyltransferase of Salmonella gallinarum (strain 287/91 / NCTC 13346).